Reading from the N-terminus, the 141-residue chain is Nucleoside triphosphatase NudI (141 aa).

The 141-residue stretch at 1-141 folds into the Nudix hydrolase domain; that stretch reads MRQRTIVCPL…RKTLRLKGLL (141 aa). The Nudix box motif lies at 38–59; that stretch reads GGVESGERIEEALRREIREELG.

This sequence belongs to the Nudix hydrolase family. NudI subfamily. In terms of assembly, monomer. The cofactor is Mg(2+).

It carries out the reaction a ribonucleoside 5'-triphosphate + H2O = a ribonucleoside 5'-phosphate + diphosphate + H(+). It catalyses the reaction a 2'-deoxyribonucleoside 5'-triphosphate + H2O = a 2'-deoxyribonucleoside 5'-phosphate + diphosphate + H(+). The catalysed reaction is dUTP + H2O = dUMP + diphosphate + H(+). The enzyme catalyses dTTP + H2O = dTMP + diphosphate + H(+). It carries out the reaction dCTP + H2O = dCMP + diphosphate + H(+). Its function is as follows. Catalyzes the hydrolysis of nucleoside triphosphates, with a preference for pyrimidine deoxynucleoside triphosphates (dUTP, dTTP and dCTP). In Shigella flexneri serotype 5b (strain 8401), this protein is Nucleoside triphosphatase NudI.